Consider the following 510-residue polypeptide: Bifunctional purine biosynthesis protein PurH (510 aa).

An MGS-like domain is found at 1-142 (MRALLSVSDK…KNYKDVMVLC (142 aa)).

Belongs to the PurH family.

It carries out the reaction (6R)-10-formyltetrahydrofolate + 5-amino-1-(5-phospho-beta-D-ribosyl)imidazole-4-carboxamide = 5-formamido-1-(5-phospho-D-ribosyl)imidazole-4-carboxamide + (6S)-5,6,7,8-tetrahydrofolate. The enzyme catalyses IMP + H2O = 5-formamido-1-(5-phospho-D-ribosyl)imidazole-4-carboxamide. It functions in the pathway purine metabolism; IMP biosynthesis via de novo pathway; 5-formamido-1-(5-phospho-D-ribosyl)imidazole-4-carboxamide from 5-amino-1-(5-phospho-D-ribosyl)imidazole-4-carboxamide (10-formyl THF route): step 1/1. It participates in purine metabolism; IMP biosynthesis via de novo pathway; IMP from 5-formamido-1-(5-phospho-D-ribosyl)imidazole-4-carboxamide: step 1/1. The sequence is that of Bifunctional purine biosynthesis protein PurH from Campylobacter jejuni subsp. jejuni serotype O:2 (strain ATCC 700819 / NCTC 11168).